Here is a 106-residue protein sequence, read N- to C-terminus: Met repressor (106 aa).

Belongs to the MetJ family. As to quaternary structure, homodimer.

It is found in the cytoplasm. In terms of biological role, this regulatory protein, when combined with SAM (S-adenosylmethionine) represses the expression of the methionine regulon and of enzymes involved in SAM synthesis. This is Met repressor from Vibrio atlanticus (strain LGP32) (Vibrio splendidus (strain Mel32)).